Here is a 323-residue protein sequence, read N- to C-terminus: Mediator of RNA polymerase II transcription subunit 4 (323 aa).

The disordered stretch occupies residues methionine 1–threonine 36. Positions phenylalanine 11 to threonine 36 are enriched in polar residues. The stretch at methionine 79 to leucine 167 forms a coiled coil. Basic and acidic residues-rich tracts occupy residues histidine 241–histidine 262 and aspartate 282–glutamine 303. The segment at histidine 241 to aspartate 323 is disordered.

The protein belongs to the Mediator complex subunit 4 family. Component of the Mediator complex.

The protein resides in the nucleus. Functionally, component of the Mediator complex, a coactivator involved in the regulated transcription of nearly all RNA polymerase II-dependent genes. Mediator functions as a bridge to convey information from gene-specific regulatory proteins to the basal RNA polymerase II transcription machinery. Mediator is recruited to promoters by direct interactions with regulatory proteins and serves as a scaffold for the assembly of a functional preinitiation complex with RNA polymerase II and the general transcription factors. This is Mediator of RNA polymerase II transcription subunit 4 (MED4) from Candida albicans (strain SC5314 / ATCC MYA-2876) (Yeast).